The following is a 455-amino-acid chain: MTTSSRTCPVPAVNGHMTHYPAAPYPLLFPPVIGGLSLPSLHGLQSHPPTSGCSTPSPASVETQSTSSEELVPSPPSPLPPPRVYKPCFVCQDKSSGYHYGVSACEGCKGFFRRSIQKNMVYTCHRDKNCVINKVTRNRCQYCRLQKCFEVGMSKESVRNDRNKKKKEPTKQESTENYEMTAELDDLTEKIRKAHQETFPSLCQLGKYTTNSSADHRVRLDLGLWDKFSELATKCIIKIVEFAKRLPGFTSLTIADQITLLKAACLDILILRICTRYTPEQDTMTFSDGLTLNRTQMHNAGFGPLTDLVFTFANQLLPLEMDDTETGLLSAICLICGDRQDLEEPMKVDKLQEPLLEALKIYIRKRRPNKPHMFPKILMKITDLRSISAKGAERVITLKMEIPGSMPPLIQEMLENSEGHEPLTPTSNGNTAEHSPSISPSSVDNSSVSQSPMVQ.

A modulating region spans residues 1–87 (MTTSSRTCPV…PLPPPRVYKP (87 aa)). A disordered region spans residues 45 to 78 (QSHPPTSGCSTPSPASVETQSTSSEELVPSPPSP). Over residues 47–66 (HPPTSGCSTPSPASVETQST) the composition is skewed to polar residues. 2 NR C4-type zinc fingers span residues 88-108 (CFVC…CEGC) and 124-148 (CHRD…LQKC). The nuclear receptor DNA-binding region spans 88 to 153 (CFVCQDKSSG…RLQKCFEVGM (66 aa)). Residues 154-182 (SKESVRNDRNKKKKEPTKQESTENYEMTA) are hinge. One can recognise an NR LBD domain in the interval 183–417 (ELDDLTEKIR…PLIQEMLENS (235 aa)). Residues 416–455 (NSEGHEPLTPTSNGNTAEHSPSISPSSVDNSSVSQSPMVQ) form a disordered region. Residues 424–434 (TPTSNGNTAEH) are compositionally biased toward polar residues. The span at 435–455 (SPSISPSSVDNSSVSQSPMVQ) shows a compositional bias: low complexity.

The protein belongs to the nuclear hormone receptor family. NR1 subfamily. In terms of assembly, heterodimer; with a RXR molecule. Binds DNA preferentially as a RAR/RXR heterodimer. In terms of tissue distribution, both isoforms expressed in heart, lung, kidney, liver, brain, lung and testis. Isoform Beta-1 is highly expressed in testes and brain. Levels increase during testes maturation. Isoform beta-2 is predominant in heart, kidney and lung.

The protein localises to the nucleus. In terms of biological role, receptor for retinoic acid. Retinoic acid receptors bind as heterodimers to their target response elements in response to their ligands, all-trans or 9-cis retinoic acid, and regulate gene expression in various biological processes. The RAR/RXR heterodimers bind to the retinoic acid response elements (RARE) composed of tandem 5'-AGGTCA-3' sites known as DR1-DR5. May be required for Sertoli cell differentiation and spermatogenesis. The chain is Retinoic acid receptor beta (RARB) from Coturnix japonica (Japanese quail).